The following is a 527-amino-acid chain: Glucose transporter 1B/1C/1D/1F/2B (527 aa).

The interval 1-22 (MTERRDNVSHAPDAIEGPNDGA) is disordered. The Cytoplasmic portion of the chain corresponds to 1-43 (MTERRDNVSHAPDAIEGPNDGAHAEDTSPGFFSLENLGVAQVQ). The helical transmembrane segment at 44-64 (VVGGTLNGYVIGYVAVYLLLY) threads the bilayer. The Extracellular segment spans residues 65 to 118 (LTATECKFTTEGACGGRKIYGCKWSGTTCKFENPKCSEGSDPSDSCKNEVAYTS). The helical transmembrane segment at 119–139 (VYSGIFACAMIVGSMVGSIIA) threads the bilayer. Over 140-151 (GKCITTFGLKKS) the chain is Cytoplasmic. Residues 152-172 (FIIVSITCTIACVVVQVAIEY) form a helical membrane-spanning segment. Residues 173–175 (NNY) are Extracellular-facing. The chain crosses the membrane as a helical span at residues 176–196 (YALCTGRVLIGLGVGILCSVF). The Cytoplasmic segment spans residues 197–213 (PMYVNENAHPKLCKMDG). The helical transmembrane segment at 214–234 (VLFQVFTTLGIMLAAMLGLIL) threads the bilayer. Topologically, residues 235–249 (DKTGASKEEANMAGR) are extracellular. The helical transmembrane segment at 250 to 270 (LHVFSAVPLGLSVAMFLVGMF) threads the bilayer. Topologically, residues 271–299 (LRESTATFAQDDDGKADGGMDPNEYGWGQ) are cytoplasmic. The helical transmembrane segment at 300 to 320 (MLWPLFMGAVTAGTLQLTGIN) threads the bilayer. At 321–338 (AVMNYAPKITENLGMDPS) the chain is on the extracellular side. Residues 339–359 (LGNFLVMAWNFVTSLVAIPLA) form a helical membrane-spanning segment. Residues 360 to 372 (SRFTMRQMFITCS) lie on the Cytoplasmic side of the membrane. Residues 373-393 (FVASCMCLFLCGIPVFPGVAG) traverse the membrane as a helical segment. Topologically, residues 394–403 (KEVKNGVATT) are extracellular. Residues 404–424 (GIALFIAAFEFGVGSCFFVLA) form a helical membrane-spanning segment. Residues 425-436 (QDLFPPSFRPKG) are Cytoplasmic-facing. A helical membrane pass occupies residues 437–457 (GSFVVMMQFIFNILINLLYPI). The Extracellular portion of the chain corresponds to 458–475 (TTEAISGGATGNQDKGQA). The chain crosses the membrane as a helical span at residues 476–496 (VAFILFGLIGLICSVLQFFYL). Topologically, residues 497–527 (YPYDANQDHENDHGGEPVEQKTYPVEASPRN) are cytoplasmic. Over residues 506 to 515 (ENDHGGEPVE) the composition is skewed to basic and acidic residues. The tract at residues 506 to 527 (ENDHGGEPVEQKTYPVEASPRN) is disordered.

Belongs to the major facilitator superfamily. Sugar transporter (TC 2.A.1.1) family.

It is found in the membrane. In terms of biological role, facilitative glucose transporter. This Trypanosoma brucei brucei protein is Glucose transporter 1B/1C/1D/1F/2B (THT1B).